Here is a 372-residue protein sequence, read N- to C-terminus: UDP-N-acetylglucosamine--N-acetylmuramyl-(pentapeptide) pyrophosphoryl-undecaprenol N-acetylglucosamine transferase (372 aa).

Residues 16–18, Asn-128, Arg-164, Ser-192, Ile-250, and Gln-295 each bind UDP-N-acetyl-alpha-D-glucosamine; that span reads TGG.

It belongs to the glycosyltransferase 28 family. MurG subfamily.

It is found in the cell inner membrane. It catalyses the reaction di-trans,octa-cis-undecaprenyl diphospho-N-acetyl-alpha-D-muramoyl-L-alanyl-D-glutamyl-meso-2,6-diaminopimeloyl-D-alanyl-D-alanine + UDP-N-acetyl-alpha-D-glucosamine = di-trans,octa-cis-undecaprenyl diphospho-[N-acetyl-alpha-D-glucosaminyl-(1-&gt;4)]-N-acetyl-alpha-D-muramoyl-L-alanyl-D-glutamyl-meso-2,6-diaminopimeloyl-D-alanyl-D-alanine + UDP + H(+). It functions in the pathway cell wall biogenesis; peptidoglycan biosynthesis. Functionally, cell wall formation. Catalyzes the transfer of a GlcNAc subunit on undecaprenyl-pyrophosphoryl-MurNAc-pentapeptide (lipid intermediate I) to form undecaprenyl-pyrophosphoryl-MurNAc-(pentapeptide)GlcNAc (lipid intermediate II). This chain is UDP-N-acetylglucosamine--N-acetylmuramyl-(pentapeptide) pyrophosphoryl-undecaprenol N-acetylglucosamine transferase, found in Paraburkholderia xenovorans (strain LB400).